A 314-amino-acid polypeptide reads, in one-letter code: Carbamate kinase (314 aa).

Belongs to the carbamate kinase family. In terms of assembly, homodimer.

It catalyses the reaction hydrogencarbonate + NH4(+) + ATP = carbamoyl phosphate + ADP + H2O + H(+). It participates in metabolic intermediate metabolism; carbamoyl phosphate degradation; CO(2) and NH(3) from carbamoyl phosphate: step 1/1. This chain is Carbamate kinase (CBK), found in Trichomonas vaginalis.